A 385-amino-acid polypeptide reads, in one-letter code: 1-deoxy-D-xylulose 5-phosphate reductoisomerase (385 aa).

Positions 10, 11, 12, 13, 37, and 124 each coordinate NADPH. Lysine 125 contributes to the 1-deoxy-D-xylulose 5-phosphate binding site. NADPH is bound at residue glutamate 126. Aspartate 150 is a Mn(2+) binding site. Serine 151, glutamate 152, serine 176, and histidine 199 together coordinate 1-deoxy-D-xylulose 5-phosphate. Glutamate 152 is a Mn(2+) binding site. Residue glycine 205 coordinates NADPH. 1-deoxy-D-xylulose 5-phosphate contacts are provided by serine 212, asparagine 217, lysine 218, and glutamate 221. Glutamate 221 provides a ligand contact to Mn(2+).

The protein belongs to the DXR family. It depends on Mg(2+) as a cofactor. Mn(2+) serves as cofactor.

It catalyses the reaction 2-C-methyl-D-erythritol 4-phosphate + NADP(+) = 1-deoxy-D-xylulose 5-phosphate + NADPH + H(+). It participates in isoprenoid biosynthesis; isopentenyl diphosphate biosynthesis via DXP pathway; isopentenyl diphosphate from 1-deoxy-D-xylulose 5-phosphate: step 1/6. Its function is as follows. Catalyzes the NADPH-dependent rearrangement and reduction of 1-deoxy-D-xylulose-5-phosphate (DXP) to 2-C-methyl-D-erythritol 4-phosphate (MEP). This chain is 1-deoxy-D-xylulose 5-phosphate reductoisomerase, found in Clostridium botulinum (strain Okra / Type B1).